We begin with the raw amino-acid sequence, 474 residues long: Stabilizer of axonemal microtubules 1 (474 aa).

Mn regions lie at residues 30 to 64, 65 to 97, 98 to 131, 132 to 165, 166 to 199, 200 to 232, 233 to 266, 267 to 299, 300 to 332, 333 to 366, 367 to 400, and 401 to 434; these read KPCLLSEYTENYPCYHSYLPRESFKPRREYQKGSI, PMEGLTTSRRDFGPHKVAPVKAHQYDQFVPSEE, NMDLLTTYKKDYNPYTVCRVDPIKPRDSKYPYSN, KMEYLPTYKADYLPWNQPRRQPLRLEHKYQPASV, RFDNRTTHQDDYPIKGLVKTVSCKPLAMPKLCNI, PLEDVTNYKMSYVAHPVEKRFVHEAEKFRPCEI, PFESLTTHKQSYRGLMGEPAKSLKPLARPPGLDM, PFSNTTEFRDKYQAWPTPQMFSKAPITYVPPED, SMDLLTTVQAHYTYPKGVPARSCRPAPQIRKSG, RFEGSSTTKDDYKQWSSMRTEPVKPIPQLDFPTE, PLDCLTTTRAHYVPHPPINTKSCKPHWSGPRGNV, and PVEGQTTYTISFTPKEMSKCLASYPEPPGYTFEE. Residues 318 to 350 are disordered; it reads PARSCRPAPQIRKSGRFEGSSTTKDDYKQWSSM. The disordered stretch occupies residues 444–474; it reads KPVSQAGSQQSSHLSVDDSENPSQRKLEVSA. Residues 448 to 457 show a composition bias toward polar residues; it reads QAGSQQSSHL.

It belongs to the FAM154 family. Associates with microtubules via the Mn regions.

The protein resides in the cytoplasm. It is found in the cytoskeleton. Its subcellular location is the microtubule organizing center. It localises to the centrosome. The protein localises to the centriole. The protein resides in the cilium basal body. It is found in the cilium axoneme. Its subcellular location is the flagellum axoneme. Its function is as follows. May play a role in the regulation of cilium length. Stabilizes microtubules at low temperature. This chain is Stabilizer of axonemal microtubules 1 (SAXO1), found in Macaca fascicularis (Crab-eating macaque).